A 125-amino-acid chain; its full sequence is Holo-[acyl-carrier-protein] synthase (125 aa).

Mg(2+) is bound by residues aspartate 8 and glutamate 57.

It belongs to the P-Pant transferase superfamily. AcpS family. The cofactor is Mg(2+).

It localises to the cytoplasm. It carries out the reaction apo-[ACP] + CoA = holo-[ACP] + adenosine 3',5'-bisphosphate + H(+). Its function is as follows. Transfers the 4'-phosphopantetheine moiety from coenzyme A to a Ser of acyl-carrier-protein. This is Holo-[acyl-carrier-protein] synthase from Nitrosomonas eutropha (strain DSM 101675 / C91 / Nm57).